Reading from the N-terminus, the 389-residue chain is Cobalt-precorrin-5B C(1)-methyltransferase (389 aa).

The tract at residues 1–25 (MESRADHAVPADEGHGATEPPRGRD) is disordered.

The protein belongs to the CbiD family.

The catalysed reaction is Co-precorrin-5B + S-adenosyl-L-methionine = Co-precorrin-6A + S-adenosyl-L-homocysteine. The protein operates within cofactor biosynthesis; adenosylcobalamin biosynthesis; cob(II)yrinate a,c-diamide from sirohydrochlorin (anaerobic route): step 6/10. Catalyzes the methylation of C-1 in cobalt-precorrin-5B to form cobalt-precorrin-6A. The protein is Cobalt-precorrin-5B C(1)-methyltransferase of Nitratidesulfovibrio vulgaris (strain ATCC 29579 / DSM 644 / CCUG 34227 / NCIMB 8303 / VKM B-1760 / Hildenborough) (Desulfovibrio vulgaris).